Here is a 613-residue protein sequence, read N- to C-terminus: Dihydroxy-acid dehydratase (613 aa).

Residue Asp81 coordinates Mg(2+). Residue Cys122 participates in [2Fe-2S] cluster binding. Mg(2+)-binding residues include Asp123 and Lys124. Residue Lys124 is modified to N6-carboxylysine. Cys195 contributes to the [2Fe-2S] cluster binding site. Glu491 contributes to the Mg(2+) binding site. Ser517 serves as the catalytic Proton acceptor.

Belongs to the IlvD/Edd family. Homodimer. [2Fe-2S] cluster serves as cofactor. Requires Mg(2+) as cofactor.

The catalysed reaction is (2R)-2,3-dihydroxy-3-methylbutanoate = 3-methyl-2-oxobutanoate + H2O. It catalyses the reaction (2R,3R)-2,3-dihydroxy-3-methylpentanoate = (S)-3-methyl-2-oxopentanoate + H2O. It functions in the pathway amino-acid biosynthesis; L-isoleucine biosynthesis; L-isoleucine from 2-oxobutanoate: step 3/4. It participates in amino-acid biosynthesis; L-valine biosynthesis; L-valine from pyruvate: step 3/4. Its function is as follows. Functions in the biosynthesis of branched-chain amino acids. Catalyzes the dehydration of (2R,3R)-2,3-dihydroxy-3-methylpentanoate (2,3-dihydroxy-3-methylvalerate) into 2-oxo-3-methylpentanoate (2-oxo-3-methylvalerate) and of (2R)-2,3-dihydroxy-3-methylbutanoate (2,3-dihydroxyisovalerate) into 2-oxo-3-methylbutanoate (2-oxoisovalerate), the penultimate precursor to L-isoleucine and L-valine, respectively. The sequence is that of Dihydroxy-acid dehydratase from Vibrio parahaemolyticus serotype O3:K6 (strain RIMD 2210633).